A 1384-amino-acid polypeptide reads, in one-letter code: Hepatocyte growth factor receptor (1384 aa).

Residues 1–24 (MKAPAVLAPGILVLLFTFVQKSNG) form the signal peptide. Residues 25 to 933 (ECKEALVKSR…VIVQPDQNFT (909 aa)) lie on the Extracellular side of the membrane. The 490-residue stretch at 27 to 516 (KEALVKSRMN…TGKKITKIPL (490 aa)) folds into the Sema domain. Residue Asn-45 is glycosylated (N-linked (GlcNAc...) asparagine). Cystine bridges form between Cys-95-Cys-101, Cys-98-Cys-160, Cys-133-Cys-141, and Cys-173-Cys-176. A glycan (N-linked (GlcNAc...) asparagine) is linked at Asn-106. Asn-149 is a glycosylation site (N-linked (GlcNAc...) asparagine). 2 N-linked (GlcNAc...) asparagine glycosylation sites follow: Asn-203 and Asn-359. 2 cysteine pairs are disulfide-bonded: Cys-299-Cys-364 and Cys-386-Cys-398. N-linked (GlcNAc...) asparagine glycosylation is found at Asn-400 and Asn-406. Cystine bridges form between Cys-521–Cys-539, Cys-527–Cys-562, Cys-530–Cys-546, and Cys-542–Cys-552. 3 IPT/TIG domains span residues 564–656 (PTIY…FSYV), 658–740 (PIIT…FIYR), and 743–837 (PIVY…LIYV). Thr-583 is a glycosylation site (O-linked (Man) threonine). N-linked (GlcNAc...) asparagine glycosylation is found at Asn-608 and Asn-636. Residues Thr-677 and Thr-762 are each glycosylated (O-linked (Man) threonine). Asn-786, Asn-880, and Asn-931 each carry an N-linked (GlcNAc...) asparagine glycan. The chain crosses the membrane as a helical span at residues 934 to 956 (GLIVGVVSVSIILLLLLGLFLWL). Residues 957–1384 (KKRKQIKDLG…NVSGEDDDDT (428 aa)) lie on the Cytoplasmic side of the membrane. Phosphoserine is present on Ser-967. The residue at position 978 (Thr-978) is a Phosphothreonine. A phosphoserine mark is found at Ser-991, Ser-998, and Ser-1001. Phosphotyrosine is present on Tyr-1004. Positions 1079-1346 (VHFNEVIGRG…RIAAIFSAFI (268 aa)) constitute a Protein kinase domain. Residues 1085-1093 (IGRGHFGCV) and Lys-1111 contribute to the ATP site. The active-site Proton acceptor is Asp-1205. The interaction with RANBP9 stretch occupies residues 1213 to 1382 (LDEKFTVKVA…QENVSGEDDD (170 aa)). Position 1231 is a phosphotyrosine (Tyr-1231). Residues Tyr-1235 and Tyr-1236 each carry the phosphotyrosine; by autocatalysis modification. The residue at position 1290 (Thr-1290) is a Phosphothreonine. The interval 1321–1360 (WHPKAELRPSFSELVSRIAAIFSAFIGEHYVHVNATYVNV) is interaction with MUC20. Phosphotyrosine; by autocatalysis occurs at positions 1350 and 1357. Residue Tyr-1366 is modified to Phosphotyrosine.

Belongs to the protein kinase superfamily. Tyr protein kinase family. In terms of assembly, heterodimer made of an alpha chain (50 kDa) and a beta chain (145 kDa) which are disulfide linked. Binds PLXNB1. Interacts when phosphorylated with downstream effectors including STAT3, PIK3R1, SRC, PCLG1, GRB2 and GAB1. Interacts with SPSB1, SPSB2 and SPSB4. Interacts with INPP5D/SHIP1. When phosphorylated at Tyr-1357, interacts with INPPL1/SHIP2. Interacts with RANBP9 and RANBP10, as well as SPSB1, SPSB2, SPSB3 and SPSB4. SPSB1 binding occurs in the presence and in the absence of HGF, however HGF treatment has a positive effect on this interaction. Interacts with MUC20; prevents interaction with GRB2 and suppresses hepatocyte growth factor-induced cell proliferation. Interacts with GRB10. Interacts with PTPN1 and PTPN2. Interacts with HSP90AA1 and HSP90AB1; the interaction suppresses MET kinase activity. Interacts with tensin TNS3. Interacts (when phosphorylated) with tensin TNS4 (via SH2 domain); the interaction increases MET protein stability by inhibiting MET endocytosis and subsequent lysosomal degradation. Post-translationally, autophosphorylated in response to ligand binding on Tyr-1235 and Tyr-1236 in the kinase domain leading to further phosphorylation of Tyr-1350 and Tyr-1357 in the C-terminal multifunctional docking site. Dephosphorylated by PTPRJ at Tyr-1350 and Tyr-1366. Dephosphorylated by PTPN1 and PTPN2. In terms of processing, ubiquitinated. Ubiquitination by CBL regulates the receptor stability and activity through proteasomal degradation. O-mannosylation of IPT/TIG domains by TMEM260 is required for protein maturation. O-mannosylated residues are composed of single mannose glycans that are not elongated or modified.

The protein localises to the membrane. The enzyme catalyses L-tyrosyl-[protein] + ATP = O-phospho-L-tyrosyl-[protein] + ADP + H(+). With respect to regulation, in its inactive state, the C-terminal tail interacts with the catalytic domain and inhibits the kinase activity. Upon ligand binding, the C-terminal tail is displaced and becomes phosphorylated, thus increasing the kinase activity. Receptor tyrosine kinase that transduces signals from the extracellular matrix into the cytoplasm by binding to hepatocyte growth factor/HGF ligand. Regulates many physiological processes including proliferation, scattering, morphogenesis and survival. Ligand binding at the cell surface induces autophosphorylation of MET on its intracellular domain that provides docking sites for downstream signaling molecules. Following activation by ligand, interacts with the PI3-kinase subunit PIK3R1, PLCG1, SRC, GRB2, STAT3 or the adapter GAB1. Recruitment of these downstream effectors by MET leads to the activation of several signaling cascades including the RAS-ERK, PI3 kinase-AKT, or PLCgamma-PKC. The RAS-ERK activation is associated with the morphogenetic effects while PI3K/AKT coordinates prosurvival effects. During embryonic development, MET signaling plays a role in gastrulation, development and migration of muscles and neuronal precursors, angiogenesis and kidney formation. In adults, participates in wound healing as well as organ regeneration and tissue remodeling. Also promotes differentiation and proliferation of hematopoietic cells. This chain is Hepatocyte growth factor receptor (MET), found in Ovis aries (Sheep).